Here is a 275-residue protein sequence, read N- to C-terminus: Chlorobenzene dihydrodiol dehydrogenase (275 aa).

Residue Y155 is the Proton acceptor of the active site.

This sequence belongs to the short-chain dehydrogenases/reductases (SDR) family.

It catalyses the reaction (1R,2R)-3-chlorocyclohexa-3,5-diene-1,2-diol + NAD(+) = 3-chlorocatechol + NADH + H(+). It functions in the pathway aromatic compound metabolism. Its function is as follows. Can transform various dihydrodiols of chlorobenzenes and chlorotoluenes into the respective catechols. The chain is Chlorobenzene dihydrodiol dehydrogenase from Cupriavidus sp. (strain PS12).